Reading from the N-terminus, the 309-residue chain is Carbamate kinase-like protein (309 aa).

A disordered region spans residues 125 to 144; it reads NKPVGPFYNTEETARSANPN.

The protein belongs to the carbamate kinase family.

This is Carbamate kinase-like protein from Mycoplasma pneumoniae (strain ATCC 29342 / M129 / Subtype 1) (Mycoplasmoides pneumoniae).